The following is a 249-amino-acid chain: 4-hydroxy-tetrahydrodipicolinate reductase (249 aa).

NAD(+)-binding positions include Asp-32, 74 to 76 (GTT), and 99 to 102 (SANF). His-134 serves as the catalytic Proton donor/acceptor. His-135 provides a ligand contact to (S)-2,3,4,5-tetrahydrodipicolinate. The active-site Proton donor is the Lys-138. 144-145 (GT) is a (S)-2,3,4,5-tetrahydrodipicolinate binding site.

The protein belongs to the DapB family.

Its subcellular location is the cytoplasm. It carries out the reaction (S)-2,3,4,5-tetrahydrodipicolinate + NAD(+) + H2O = (2S,4S)-4-hydroxy-2,3,4,5-tetrahydrodipicolinate + NADH + H(+). The catalysed reaction is (S)-2,3,4,5-tetrahydrodipicolinate + NADP(+) + H2O = (2S,4S)-4-hydroxy-2,3,4,5-tetrahydrodipicolinate + NADPH + H(+). Its pathway is amino-acid biosynthesis; L-lysine biosynthesis via DAP pathway; (S)-tetrahydrodipicolinate from L-aspartate: step 4/4. Catalyzes the conversion of 4-hydroxy-tetrahydrodipicolinate (HTPA) to tetrahydrodipicolinate. The polypeptide is 4-hydroxy-tetrahydrodipicolinate reductase (Chlorobaculum parvum (strain DSM 263 / NCIMB 8327) (Chlorobium vibrioforme subsp. thiosulfatophilum)).